A 274-amino-acid polypeptide reads, in one-letter code: Ribosomal RNA small subunit methyltransferase A (274 aa).

The S-adenosyl-L-methionine site is built by H15, L17, G42, E64, D89, and N109.

This sequence belongs to the class I-like SAM-binding methyltransferase superfamily. rRNA adenine N(6)-methyltransferase family. RsmA subfamily.

Its subcellular location is the cytoplasm. It carries out the reaction adenosine(1518)/adenosine(1519) in 16S rRNA + 4 S-adenosyl-L-methionine = N(6)-dimethyladenosine(1518)/N(6)-dimethyladenosine(1519) in 16S rRNA + 4 S-adenosyl-L-homocysteine + 4 H(+). Specifically dimethylates two adjacent adenosines (A1518 and A1519) in the loop of a conserved hairpin near the 3'-end of 16S rRNA in the 30S particle. May play a critical role in biogenesis of 30S subunits. The sequence is that of Ribosomal RNA small subunit methyltransferase A from Synechococcus sp. (strain CC9902).